The following is a 76-amino-acid chain: MLKELINKLLWHPDYNSEDYLIKYLHRGAENDEKSVPLKNIVIEDSFLVFDETHIPFHRILEIVNLKNGEILYKKR.

It belongs to the UPF0248 family.

This Methanococcus maripaludis (strain C5 / ATCC BAA-1333) protein is UPF0248 protein MmarC5_1387.